We begin with the raw amino-acid sequence, 793 residues long: MPRVASVAAVLAALLPSALGQANTSYVDYNHEANPDLFPQCVATIELSFPDCENGPLSKTLVCDKSARPHDRAAALVSMFTLEELVNNTGNTGTGVPRLGLPKYQVWSESLHGVYRANWASEGDYSWATSFPQPILTMAALNRTLIHQIGDILSTQARAFSNVGRYGLDTYAPNINSFRHPVWGRGQETPGEDAYYLASTYAYEYITGIQGGVDPETLKLVATAKHYAGYDIENWDGHSRLGNDMQITQQDLSEYYTPQFLVSARDAKVHSVMCSYNAVNGVPSCSNSFFLQTLLRETFGFVEDGYVSGDCGAVYNAFNPHEYAANESSASADSIRAGTDIDCGTSYQYHFTNAFDEGEISRQDIERGVIRLYTNLVRLGYFDGNSSQYRDLTWSDVQTTDAWNISHEAAVEGTVLLKNDGTLPLADSIRSVALIGPWANATTQMQGNYYGPAPYLTSPLAALEASDLDVHYAFGTNISSTTTAGFADALAAARKADAIIFAGGIDNTIEGEALDRMNITWPGNQLDLINQLSALGKPLVVLQMGGGQVDSSALKHNTNVSALLWGGYPGQSGGTALLDIIRGVRAPAGRLVTTQYPAGYATQFPAIDMGLRPNGTNPGQTYMWYTGTPVYEFGHGLFYTTFEAKRASTATNHSSFNIEDLLTAPHPGYAYPQLRPFLNFTAHITNTGRTTSDYTAMLFANTTAGPAPHPNKWLVGFDRLGALEPGASQTMTFPITIDNVARTDELGNRVLYPGRYELALNNERSVVLRFTLTGEKAVLMKWPLEKQEIPPAA.

The first 20 residues, 1 to 20, serve as a signal peptide directing secretion; the sequence is MPRVASVAAVLAALLPSALG. N-linked (GlcNAc...) asparagine glycosylation is found at Asn-23, Asn-87, and Asn-142. Asp-310 is an active-site residue. N-linked (GlcNAc...) asparagine glycosylation is found at Asn-326, Asn-385, Asn-404, Asn-440, Asn-477, Asn-518, Asn-559, Asn-614, Asn-652, Asn-679, and Asn-701.

Belongs to the glycosyl hydrolase 3 family.

Its subcellular location is the secreted. It catalyses the reaction Hydrolysis of (1-&gt;4)-beta-D-xylans, to remove successive D-xylose residues from the non-reducing termini.. It functions in the pathway glycan degradation; xylan degradation. Its function is as follows. Xylan 1,4-beta-xylosidase involved in the hydrolysis of xylan, a major structural heterogeneous polysaccharide found in plant biomass representing the second most abundant polysaccharide in the biosphere, after cellulose. The protein is Probable exo-1,4-beta-xylosidase xlnD (xlnD) of Aspergillus terreus (strain NIH 2624 / FGSC A1156).